An 831-amino-acid polypeptide reads, in one-letter code: Sodium/hydrogen exchanger 3 (831 aa).

The N-terminal stretch at 1-28 (MWHPALGPGWKPLLALALALTSLRGVRG) is a signal peptide. Residues 29 to 48 (IEEEPNSGGSFQIVTFKWHH) are Extracellular-facing. A helical transmembrane segment spans residues 49-71 (VQDPYIIALWILVASLAKIVFHL). At 72-79 (SHKVTSVV) the chain is on the cytoplasmic side. Residues 80 to 99 (PESALLIVLGLVLGGIVWAA) traverse the membrane as a helical segment. Residues 100–108 (DHIASFTLT) are Extracellular-facing. Residues 109–126 (PTLFFFYLLPPIVLDAGY) traverse the membrane as a helical segment. Over 127 to 129 (FMP) the chain is Cytoplasmic. A helical transmembrane segment spans residues 130 to 165 (NRLFFGNLGTILLYAVIGTIWNAATTGLSLYGVFLS). G135, G138, and T139 together coordinate a 1,2-diacyl-sn-glycero-3-phospho-(1D-myo-inositol). Topologically, residues 166 to 178 (GLMGELKIGLLDF) are extracellular. Residues 179 to 200 (LLFGSLIAAVDPVAVLAVFEEV) traverse the membrane as a helical segment. Over 201–202 (HV) the chain is Cytoplasmic. A helical membrane pass occupies residues 203–234 (NEVLFIIVFGESLLNDAVTVVLYNVFESFVTL). Topologically, residues 235-241 (GGDAVTG) are extracellular. Residues 242 to 276 (VDCVKGIVSFFVVSLGGTLVGVIFAFLLSLVTRFT) traverse the membrane as a helical segment. Topologically, residues 277–278 (KH) are cytoplasmic. Residues 279–301 (VRIIEPGFVFVISYLSYLTSEML) traverse the membrane as a helical segment. Residues 302–303 (SL) are Extracellular-facing. Residues 304–320 (SAILAITFCGICCQKYV) traverse the membrane as a helical segment. Residues 321–327 (KANISEQ) are Cytoplasmic-facing. Residues 328–356 (SATTVRYTMKMLASGAETIIFMFLGISAV) traverse the membrane as a helical segment. Residues 357 to 364 (DPVIWTWN) are Extracellular-facing. Residues 365-386 (TAFVLLTLVFISVYRAIGVVLQ) form a helical membrane-spanning segment. The Cytoplasmic segment spans residues 387–399 (TWILNRYRMVQLE). M395 serves as a coordination point for a 1,2-diacyl-sn-glycero-3-phospho-(1D-myo-inositol). The helical transmembrane segment at 400-423 (TIDQVVMSYGGLRGAVAYALVVLL) threads the bilayer. The Extracellular segment spans residues 424-430 (DEKKVKE). The helical transmembrane segment at 431–464 (KNLFVSTTLIVVFFTVIFQGLTIKPLVQWLKVKR) threads the bilayer. At 465 to 831 (SEQREPKLNE…QPASPESTHM (367 aa)) the chain is on the cytoplasmic side. 3 residues coordinate a 1,2-diacyl-sn-glycero-3-phospho-(1D-myo-inositol): Q494, I495, and H497. 2 positions are modified to phosphoserine: S552 and S560. Residues 573 to 587 (RPSTVEASVSYFLRE) are interaction with EZR. Residues 588-665 (NVSAVCLDMQ…RKRLESFKSA (78 aa)) form an interaction with NHERF4 region. Residues 589–693 (VSAVCLDMQS…AQKRRNSSIP (105 aa)) form an interaction with AHCYL1 region. 2 positions are modified to phosphoserine: S590 and S605. At S661 the chain carries Phosphoserine; by SGK1. A phosphoserine mark is found at S716, S807, and S810. The tract at residues 808–831 (VDSFLQADGPEEQLQPASPESTHM) is disordered. Positions 822–831 (QPASPESTHM) are enriched in polar residues.

This sequence belongs to the monovalent cation:p,roton antiporter 1 (CPA1) transporter (TC 2.A.36) family. Homodimer. Found in the forms of complex and dynamic macromolecular complexes. Binds NHERF1 and NHERF2. Interacts with NHERF4 and interactions decrease in response to elevated calcium ion levels. Interacts with PDZK1 (via C-terminal PDZ domain). Interacts with CHP1; this interaction increases trafficking and activity at the plasma membrane of SLC9A3. Interacts with CHP2 and SHANK2. Interacts with AHCYL1; the interaction is required for SLC9A3 activity. Interacts with EZR; interaction targets SLC9A3 to the apical membrane. Interacts with SNX27 (via PDZ domains); directs SLC9A3 membrane insertion from early endosomes to the plasma membrane. Phosphorylated by PRKACA at Ser-552 and Ser-605, which inhibits activity. Phosphorylation of Ser-605 is essential for cAMP-mediated inhibition of SLC9A3. Phosphorylation at Ser-661 by SGK1 is associated with increased abundance at the cell membrane. Phosphorylation at Ser-716 by CSNK2A1 regulates SLC9A3 activity through the formation of multiple signaling complexes. In terms of tissue distribution, most abundant in colon and small intestine, followed by kidney and stomach. In kidney, expressed in proximal tubules and outer medulla (at protein level).

The protein localises to the apical cell membrane. It localises to the cell membrane. It is found in the recycling endosome membrane. The protein resides in the early endosome membrane. The enzyme catalyses Na(+)(in) + H(+)(out) = Na(+)(out) + H(+)(in). Seems to switch between active and inactive modes in response to various stimuli. Activated directly or indirectly by membrane phosphatidylinositol (PIs). Regulated by a variety of auxiliary proteins, which facilitate the maturation, cell surface expression and function of the transporter. Inhibited specifically by the drug tenapanor. Plasma membrane Na(+)/H(+) antiporter. Exchanges intracellular H(+) ions for extracellular Na(+) in 1:1 stoichiometry, playing a key role in salt and fluid absorption and pH homeostasis. Major apical Na(+)/H(+) exchanger in kidney and intestine playing an important role in renal and intestine Na(+) absorption and blood pressure regulation. This is Sodium/hydrogen exchanger 3 (Slc9a3) from Rattus norvegicus (Rat).